The following is a 49-amino-acid chain: Osteocalcin (49 aa).

Positions 1–47 (YLDSGLGAPVPYPDPLEPKREVCELNPNCDELADHIGFQEAYQRFYG) constitute a Gla domain. 4 residues coordinate Ca(2+): Glu17, Glu21, Glu24, and Asp30. A 4-carboxyglutamate mark is found at Glu17, Glu21, and Glu24. A disulfide bridge links Cys23 with Cys29.

It belongs to the osteocalcin/matrix Gla protein family. In terms of processing, gamma-carboxyglutamate residues are formed by vitamin K dependent carboxylation by GGCX. These residues are essential for the binding of calcium. Decarboxylation promotes the hormone activity.

It localises to the secreted. The carboxylated form is one of the main organic components of the bone matrix, which constitutes 1-2% of the total bone protein. It acts as a negative regulator of bone formation and is required to limit bone formation without impairing bone resorption or mineralization. The carboxylated form binds strongly to apatite and calcium. Functionally, the uncarboxylated form acts as a hormone secreted by osteoblasts, which regulates different cellular processes, such as energy metabolism, male fertility and brain development. Regulates of energy metabolism by acting as a hormone favoring pancreatic beta-cell proliferation, insulin secretion and sensitivity and energy expenditure. Uncarboxylated osteocalcin hormone also promotes testosterone production in the testes: acts as a ligand for G protein-coupled receptor GPRC6A at the surface of Leydig cells, initiating a signaling response that promotes the expression of enzymes required for testosterone synthesis in a CREB-dependent manner. Also acts as a regulator of brain development: osteocalcin hormone crosses the blood-brain barrier and acts as a ligand for GPR158 on neurons, initiating a signaling response that prevents neuronal apoptosis in the hippocampus, favors the synthesis of all monoamine neurotransmitters and inhibits that of gamma-aminobutyric acid (GABA). Osteocalcin also crosses the placenta during pregnancy and maternal osteocalcin is required for fetal brain development. This chain is Osteocalcin (BGLAP), found in Canis lupus familiaris (Dog).